The sequence spans 163 residues: Photosystem II extrinsic protein V (163 aa).

The signal sequence occupies residues 1-26 (MLKKCVWLAVALCLCLWQFTMGTALA). Heme c contacts are provided by histidine 67 and histidine 118.

Belongs to the cytochrome c family. PsbV subfamily. PSII is composed of 1 copy each of membrane proteins PsbA, PsbB, PsbC, PsbD, PsbE, PsbF, PsbH, PsbI, PsbJ, PsbK, PsbL, PsbM, PsbT, PsbX, PsbY, PsbZ, Psb30/Ycf12, peripheral proteins PsbO, CyanoQ (PsbQ), PsbU, PsbV and a large number of cofactors. It forms dimeric complexes. Heme c is required as a cofactor.

Its subcellular location is the cellular thylakoid membrane. Its function is as follows. One of the extrinsic, lumenal subunits of photosystem II (PSII). PSII is a light-driven water plastoquinone oxidoreductase, using light energy to abstract electrons from H(2)O, generating a proton gradient subsequently used for ATP formation. The extrinsic proteins stabilize the structure of photosystem II oxygen-evolving complex (OEC), the ion environment of oxygen evolution and protect the OEC against heat-induced inactivation. Low-potential cytochrome c that plays a role in the OEC of PSII. This is Photosystem II extrinsic protein V from Thermosynechococcus vestitus (strain NIES-2133 / IAM M-273 / BP-1).